Here is a 496-residue protein sequence, read N- to C-terminus: MPSILTDFNVRPYEDVPAQIIELSVPDAAAPKHCPIQLLYWPVEGKSNFIRGYENLKDGLSRLLADVPVLVGRLERGSKGDPRYLAVTISSDASVELEYEDISADDTIASYDDLVRNGFPTTGFKDIVSPKMSLGPMVEGSPMMCAKLNLIKGGAILAYGFSHVLADGWANSELGRLWALHAAHVSQGIGFERQKAATPDDEIRRQLSTLPDFDADAPLDAFLQITPSEEATNFLHKDVLAAEKAKKKAREKMMATLLAAGEVPELPRFTFWRFTPEKLKELKQAATSSDASKWISTMDALAGLFWSRIARIQGQSSNGHQQSRCIFALDIRRRLQQPVPLAYVGNVFSPVDAICPLDELESDSLGLKAAAQSMRQANKGWTQPRWEAWLNKIMSLPLDQTLDTSQEFRLQKHNMYFNDYSAFQLNTASWGAPFGQPARTRCLRSGLAGGAAGVWVCPKFPDGSLEVWLTSTAAIQKSLFEDATFNRYAEFVCQYT.

Histidine 163 serves as the catalytic Proton acceptor.

The protein belongs to the plant acyltransferase family. Monomer.

It functions in the pathway secondary metabolite biosynthesis. In terms of biological role, acyltransferase; part of the gene cluster that mediates the biosynthesis of squalestatin S1 (SQS1, also known as zaragozic acid A), a heavily oxidized fungal polyketide that offers potent cholesterol lowering activity by targeting squalene synthase (SS). SQS1 is composed of a 2,8-dioxobicyclic[3.2.1]octane-3,4,5-tricarboxyclic acid core that is connected to two lipophilic polyketide arms. These initial steps feature the priming of an unusual benzoic acid starter unit onto the highly reducing polyketide synthase pks2, followed by oxaloacetate extension and product release to generate a tricarboxylic acid containing product. The phenylalanine ammonia lyase (PAL) M7 and the acyl-CoA ligase M9 are involved in transforming phenylalanine into benzoyl-CoA. The citrate synthase-like protein R3 is involved in connecting the C-alpha-carbons of the hexaketide chain and oxaloacetate to afford the tricarboxylic acid unit. The potential hydrolytic enzymes, M8 and M10, are in close proximity to pks2 and may participate in product release. On the other side, the tetraketide arm is synthesized by a the squalestatin tetraketide synthase pks1 and enzymatically esterified to the core in the last biosynthetic step, by the acetyltransferase M4. The biosynthesis of the tetraketide must involve 3 rounds of chain extension. After the first and second rounds methyl-transfer occurs, and in all rounds of extension the ketoreductase and dehydratase are active. The enoyl reductase and C-MeT of pks1 are not active in the final round of extension. The acetyltransferase M4 appears to have a broad substrate selectivity for its acyl CoA substrate, allowing the in vitro synthesis of novel squalestatins. The biosynthesis of SQS1 requires several oxidative steps likely performed by oxidoreductases M1, R1 and R2. Finally, in support of the identification of the cluster as being responsible for SQS1 production, the cluster contains a gene encoding a putative squalene synthase (SS) R6, suggesting a likely mechanism for self-resistance. The sequence is that of Acyltransferase M4 from Phoma sp. (strain ATCC 20986 / MF5453).